A 367-amino-acid chain; its full sequence is tRNA pseudouridine synthase D (367 aa).

Catalysis depends on Asp78, which acts as the Nucleophile. Residues 153-300 (GVPNYFGEQR…KQERRRIRLT (148 aa)) enclose the TRUD domain.

The protein belongs to the pseudouridine synthase TruD family.

The enzyme catalyses uridine(13) in tRNA = pseudouridine(13) in tRNA. Its function is as follows. Responsible for synthesis of pseudouridine from uracil-13 in transfer RNAs. This Colwellia psychrerythraea (strain 34H / ATCC BAA-681) (Vibrio psychroerythus) protein is tRNA pseudouridine synthase D.